Reading from the N-terminus, the 67-residue chain is Protein AaeX (67 aa).

The next 2 helical transmembrane spans lie at 3–23 and 43–63; these read LFPVIVVFGLSFPPIFFELLL and FVWHPALFNTALYCCLFYLIS.

Belongs to the AaeX family.

It is found in the cell membrane. The sequence is that of Protein AaeX from Escherichia coli (strain K12 / DH10B).